Reading from the N-terminus, the 238-residue chain is MAEPVYRRVVVKLSGEYLAGPHSFGIDQATVDRIADDLIAAQKLGIEIAVVVGGGNMVRGVEVSSQGVSRPTGDTMGMLATVMNCLALEAAIQRKGAPAQALSAFVMPQVCELFTRAAAHKALAEGRIVVLGGGTGNPYFTTDTTAVLRAAEIGAQAVLKATNVDGVYSADPKKDPAAKRFDRLTHSQAIEGGYKVMDATAFALARETSLPIIVFSIAEPGAIGAMLRGEGRGTIVAG.

Residue 12–15 (KLSG) participates in ATP binding. Gly54 contacts UMP. The ATP site is built by Gly55 and Arg59. Residues Asp74 and 135–142 (TGNPYFTT) contribute to the UMP site. ATP contacts are provided by Thr162, Asn163, Tyr168, and Asp171.

The protein belongs to the UMP kinase family. Homohexamer.

Its subcellular location is the cytoplasm. It catalyses the reaction UMP + ATP = UDP + ADP. Its pathway is pyrimidine metabolism; CTP biosynthesis via de novo pathway; UDP from UMP (UMPK route): step 1/1. Its activity is regulated as follows. Inhibited by UTP. In terms of biological role, catalyzes the reversible phosphorylation of UMP to UDP. In Bradyrhizobium sp. (strain BTAi1 / ATCC BAA-1182), this protein is Uridylate kinase.